The sequence spans 253 residues: uncharacterized protein (253 aa).

Residues I17, S36, D62, N89, Y158, K162, V191, and T193 each contribute to the NADP(+) site. The active-site Proton donor is the Y158. K162 functions as the Lowers pKa of active site Tyr in the catalytic mechanism.

The protein belongs to the short-chain dehydrogenases/reductases (SDR) family.

It is found in the cytoplasm. It localises to the nucleus. This is an uncharacterized protein from Schizosaccharomyces pombe (strain 972 / ATCC 24843) (Fission yeast).